A 477-amino-acid polypeptide reads, in one-letter code: tRNA-2-methylthio-N(6)-dimethylallyladenosine synthase (477 aa).

Residues Gly13–Ala130 enclose the MTTase N-terminal domain. [4Fe-4S] cluster-binding residues include Cys22, Cys59, Cys93, Cys178, Cys182, and Cys185. A Radical SAM core domain is found at Glu164 to Ala396. Positions Glu399–Ala462 constitute a TRAM domain.

The protein belongs to the methylthiotransferase family. MiaB subfamily. Monomer. Requires [4Fe-4S] cluster as cofactor.

It localises to the cytoplasm. It catalyses the reaction N(6)-dimethylallyladenosine(37) in tRNA + (sulfur carrier)-SH + AH2 + 2 S-adenosyl-L-methionine = 2-methylsulfanyl-N(6)-dimethylallyladenosine(37) in tRNA + (sulfur carrier)-H + 5'-deoxyadenosine + L-methionine + A + S-adenosyl-L-homocysteine + 2 H(+). In terms of biological role, catalyzes the methylthiolation of N6-(dimethylallyl)adenosine (i(6)A), leading to the formation of 2-methylthio-N6-(dimethylallyl)adenosine (ms(2)i(6)A) at position 37 in tRNAs that read codons beginning with uridine. The polypeptide is tRNA-2-methylthio-N(6)-dimethylallyladenosine synthase (Hydrogenovibrio crunogenus (strain DSM 25203 / XCL-2) (Thiomicrospira crunogena)).